Reading from the N-terminus, the 769-residue chain is Acetyl-coenzyme A carboxylase carboxyl transferase subunit alpha, chloroplastic (769 aa).

Residues 1-54 constitute a chloroplast transit peptide; it reads MASISHSSLALGGASSASASDYLRSSSNGVNGVPLKTLGRAVFTTIRRKDLAVT. In terms of domain architecture, CoA carboxyltransferase C-terminal spans 132–385; the sequence is LENKYRQALK…KIAINENMNE (254 aa). 2 coiled-coil regions span residues 426–504 and 631–744; these read EAVF…ASSE and KQNQ…SDGS. Residues 718–769 form a disordered region; sequence GLQEKQDELEKELAAARELAAEESDGSVKEDDDDDEDSSESGKSEMVNPSFA. Over residues 721–732 the composition is skewed to basic and acidic residues; it reads EKQDELEKELAA. A compositionally biased stretch (acidic residues) spans 738–756; sequence AEESDGSVKEDDDDDEDSS. Serine 741 is subject to Phosphoserine.

The protein belongs to the AccA family. In terms of assembly, acetyl-CoA carboxylase is a heterohexamer composed of biotin carboxyl carrier protein, biotin carboxylase and two subunits each of ACCase subunit alpha and ACCase plastid-coded subunit beta (accD). Accumulates in fatty acids synthesizing tissues such as embryos, expanding leaves, flower buds, flowers, and developing siliques.

It is found in the plastid. The protein resides in the chloroplast inner membrane. The enzyme catalyses N(6)-carboxybiotinyl-L-lysyl-[protein] + acetyl-CoA = N(6)-biotinyl-L-lysyl-[protein] + malonyl-CoA. The protein operates within lipid metabolism; malonyl-CoA biosynthesis; malonyl-CoA from acetyl-CoA: step 1/1. Functionally, component of the acetyl coenzyme A carboxylase (ACC) complex. First, biotin carboxylase catalyzes the carboxylation of biotin on its carrier protein (BCCP) and then the CO(2) group is transferred by the carboxyltransferase to acetyl-CoA to form malonyl-CoA. The sequence is that of Acetyl-coenzyme A carboxylase carboxyl transferase subunit alpha, chloroplastic (CAC3) from Arabidopsis thaliana (Mouse-ear cress).